A 380-amino-acid chain; its full sequence is Cytochrome b (380 aa).

The next 4 helical transmembrane spans lie at 34–54 (FGSL…LLAT), 78–99 (WLIR…YLHI), 114–134 (WNTG…GYVL), and 179–199 (FFAL…IHLT). Positions 84 and 98 each coordinate heme b. Residues His-183 and His-197 each contribute to the heme b site. Residue His-202 participates in a ubiquinone binding. 4 consecutive transmembrane segments (helical) span residues 227 to 247 (LKDI…ALFS), 289 to 309 (LGGV…PFLH), 321 to 341 (ISQL…WVGS), and 348 to 368 (FIII…ILFP).

Belongs to the cytochrome b family. As to quaternary structure, the cytochrome bc1 complex contains 11 subunits: 3 respiratory subunits (MT-CYB, CYC1 and UQCRFS1), 2 core proteins (UQCRC1 and UQCRC2) and 6 low-molecular weight proteins (UQCRH/QCR6, UQCRB/QCR7, UQCRQ/QCR8, UQCR10/QCR9, UQCR11/QCR10 and a cleavage product of UQCRFS1). This cytochrome bc1 complex then forms a dimer. Requires heme b as cofactor.

The protein localises to the mitochondrion inner membrane. Component of the ubiquinol-cytochrome c reductase complex (complex III or cytochrome b-c1 complex) that is part of the mitochondrial respiratory chain. The b-c1 complex mediates electron transfer from ubiquinol to cytochrome c. Contributes to the generation of a proton gradient across the mitochondrial membrane that is then used for ATP synthesis. This chain is Cytochrome b (MT-CYB), found in Pelecanoides magellani (Magellanic diving petrel).